The following is a 350-amino-acid chain: tRNA uridine(34) hydroxylase (350 aa).

Residues aspartate 146–leucine 240 enclose the Rhodanese domain. Residue cysteine 200 is the Cysteine persulfide intermediate of the active site. The span at arginine 319–glycine 328 shows a compositional bias: basic and acidic residues. Residues arginine 319–glutamate 350 are disordered.

The protein belongs to the TrhO family.

It catalyses the reaction uridine(34) in tRNA + AH2 + O2 = 5-hydroxyuridine(34) in tRNA + A + H2O. In terms of biological role, catalyzes oxygen-dependent 5-hydroxyuridine (ho5U) modification at position 34 in tRNAs. The sequence is that of tRNA uridine(34) hydroxylase from Salmonella choleraesuis (strain SC-B67).